A 314-amino-acid chain; its full sequence is 4-hydroxy-3-methylbut-2-enyl diphosphate reductase (314 aa).

Cysteine 12 contacts [4Fe-4S] cluster. Residues histidine 41 and histidine 74 each coordinate (2E)-4-hydroxy-3-methylbut-2-enyl diphosphate. 2 residues coordinate dimethylallyl diphosphate: histidine 41 and histidine 74. Residues histidine 41 and histidine 74 each contribute to the isopentenyl diphosphate site. [4Fe-4S] cluster is bound at residue cysteine 96. Histidine 124 contacts (2E)-4-hydroxy-3-methylbut-2-enyl diphosphate. Histidine 124 contacts dimethylallyl diphosphate. Histidine 124 lines the isopentenyl diphosphate pocket. Glutamate 126 functions as the Proton donor in the catalytic mechanism. A (2E)-4-hydroxy-3-methylbut-2-enyl diphosphate-binding site is contributed by threonine 167. Cysteine 197 lines the [4Fe-4S] cluster pocket. (2E)-4-hydroxy-3-methylbut-2-enyl diphosphate is bound by residues serine 225, serine 226, asparagine 227, and serine 269. 4 residues coordinate dimethylallyl diphosphate: serine 225, serine 226, asparagine 227, and serine 269. 4 residues coordinate isopentenyl diphosphate: serine 225, serine 226, asparagine 227, and serine 269.

The protein belongs to the IspH family. The cofactor is [4Fe-4S] cluster.

It catalyses the reaction isopentenyl diphosphate + 2 oxidized [2Fe-2S]-[ferredoxin] + H2O = (2E)-4-hydroxy-3-methylbut-2-enyl diphosphate + 2 reduced [2Fe-2S]-[ferredoxin] + 2 H(+). The catalysed reaction is dimethylallyl diphosphate + 2 oxidized [2Fe-2S]-[ferredoxin] + H2O = (2E)-4-hydroxy-3-methylbut-2-enyl diphosphate + 2 reduced [2Fe-2S]-[ferredoxin] + 2 H(+). It functions in the pathway isoprenoid biosynthesis; dimethylallyl diphosphate biosynthesis; dimethylallyl diphosphate from (2E)-4-hydroxy-3-methylbutenyl diphosphate: step 1/1. Its pathway is isoprenoid biosynthesis; isopentenyl diphosphate biosynthesis via DXP pathway; isopentenyl diphosphate from 1-deoxy-D-xylulose 5-phosphate: step 6/6. Its function is as follows. Catalyzes the conversion of 1-hydroxy-2-methyl-2-(E)-butenyl 4-diphosphate (HMBPP) into a mixture of isopentenyl diphosphate (IPP) and dimethylallyl diphosphate (DMAPP). Acts in the terminal step of the DOXP/MEP pathway for isoprenoid precursor biosynthesis. The protein is 4-hydroxy-3-methylbut-2-enyl diphosphate reductase of Mannheimia succiniciproducens (strain KCTC 0769BP / MBEL55E).